Consider the following 218-residue polypeptide: Flagellar calcium-binding protein TB-24 (218 aa).

A disordered region spans residues 1–27; the sequence is MGCSASKDTTNSKDGAASKGGKDGKTT. EF-hand domains lie at 48-83, 84-119, 130-165, and 167-202; these read ESKS…ILKL, DEFT…LVEF, YDIF…LKEW, and VDIT…KKLQ. Residues aspartate 61, asparagine 63, threonine 65, lysine 67, and glutamate 72 each coordinate Ca(2+). Residues aspartate 143, aspartate 145, serine 147, glutamate 154, aspartate 180, asparagine 182, serine 184, and glutamate 191 each contribute to the Ca(2+) site.

The protein belongs to the calflagin family.

It localises to the cell projection. The protein localises to the cilium. The protein resides in the flagellum. In terms of biological role, may contribute to the rapid motility of the trypanosomes, playing a role either in flagellar structure or in calcium metabolism. Could alternate between a GDP-bound inactive form to a calcium/GTP-bound active form. The chain is Flagellar calcium-binding protein TB-24 from Trypanosoma brucei brucei.